The following is a 500-amino-acid chain: Probable glycine dehydrogenase (decarboxylating) subunit 2 (500 aa).

The interval 1–25 (MLIFEHSRPGRRNYSQSPKAAEATD) is disordered. Position 263 is an N6-(pyridoxal phosphate)lysine (K263).

Belongs to the GcvP family. C-terminal subunit subfamily. As to quaternary structure, the glycine cleavage system is composed of four proteins: P, T, L and H. In this organism, the P 'protein' is a heterodimer of two subunits. Pyridoxal 5'-phosphate serves as cofactor.

The catalysed reaction is N(6)-[(R)-lipoyl]-L-lysyl-[glycine-cleavage complex H protein] + glycine + H(+) = N(6)-[(R)-S(8)-aminomethyldihydrolipoyl]-L-lysyl-[glycine-cleavage complex H protein] + CO2. Its function is as follows. The glycine cleavage system catalyzes the degradation of glycine. The P protein binds the alpha-amino group of glycine through its pyridoxal phosphate cofactor; CO(2) is released and the remaining methylamine moiety is then transferred to the lipoamide cofactor of the H protein. The sequence is that of Probable glycine dehydrogenase (decarboxylating) subunit 2 from Nitrosospira multiformis (strain ATCC 25196 / NCIMB 11849 / C 71).